The primary structure comprises 868 residues: Probable mixed-linked glucan synthase 3 (868 aa).

A disordered region spans residues 36 to 68 (ERKAAGGGGGGAKGKHWAAADKGERRAAKECGG). Over residues 53-68 (AAADKGERRAAKECGG) the composition is skewed to basic and acidic residues. Helical transmembrane passes span 86-106 (LLHPYRALIFARLIAVLLFFG) and 116-136 (IMWFWTMSVAGDVWFGFSWLL). D211 is a catalytic residue. Substrate is bound by residues D412 and D414. D573 is an active-site residue. 6 consecutive transmembrane segments (helical) span residues 649-669 (IYPVTSLFILLYAISPVMWLI), 686-706 (LLVIILMIHMIGWLEIKWAGI), 717-737 (FFMIGSTSAYPTAVLHMVVNL), 771-791 (MLIPTMVVLVANIGAIGVAIG), 810-830 (MGLLFNMWVMFLLYPFALAIM), and 838-858 (IILVVLLPIIFVIVALVYVAT).

It belongs to the glycosyltransferase 2 family. Plant cellulose synthase-like F subfamily.

The protein resides in the golgi apparatus membrane. Its function is as follows. May catalyze both beta-1,3 and beta-1,4 glycosidic linkage on beta-D-glucan. Essential for (1,3;1,4)-beta-D-glucans synthesis in grasses and cereals (Poaceae). The mixed-linked glucans (which are not present in walls of dicotyledons or most other monocotyledonous plants) are particularly important constituents of the walls of the starchy endosperm and aleurone cells of cereal grains such as oats, wheat, rice and barley. They can account for up to 70% by weight of the wall. This chain is Probable mixed-linked glucan synthase 3 (CSLF3), found in Oryza sativa subsp. japonica (Rice).